A 394-amino-acid polypeptide reads, in one-letter code: Elongation factor Tu (394 aa).

A tr-type G domain is found at 10-204 (KPHVNVGTIG…ALDSYIPTPE (195 aa)). The G1 stretch occupies residues 19–26 (GHVDHGKT). 19–26 (GHVDHGKT) provides a ligand contact to GTP. Residue T26 coordinates Mg(2+). Residues 60–64 (GITIN) form a G2 region. The G3 stretch occupies residues 81 to 84 (DCPG). Residues 81 to 85 (DCPGH) and 136 to 139 (NKCD) each bind GTP. A G4 region spans residues 136–139 (NKCD). Positions 174–176 (SAL) are G5.

It belongs to the TRAFAC class translation factor GTPase superfamily. Classic translation factor GTPase family. EF-Tu/EF-1A subfamily. As to quaternary structure, monomer.

The protein resides in the cytoplasm. The enzyme catalyses GTP + H2O = GDP + phosphate + H(+). GTP hydrolase that promotes the GTP-dependent binding of aminoacyl-tRNA to the A-site of ribosomes during protein biosynthesis. This is Elongation factor Tu from Neisseria gonorrhoeae (strain ATCC 700825 / FA 1090).